The following is a 277-amino-acid chain: MNFFLSSRWSVRLALIIIALLALIALTSQWWLPYDPQAIDLPSRLLSPDAQHWLGTDHLGRDIFSRLMAATRVSLGSVMACLLLVLTLGLVIGGSAGLIGGRVDQATMRVADMFMTFPTSILSFFMVGVLGTGLTNVIIAIALSHWAWYARMVRSLVISLRQREFVLASRLSGAGHVRVFVDHLAGAVIPSLLVLATLDIGHMMLHVAGMSFLGLGVTAPTAEWGVMINDARQYIWTQPLQMFWPGLALFISVMAFNLVGDALRDHLDPHLVTEHAH.

Over 1–12 the chain is Cytoplasmic; that stretch reads MNFFLSSRWSVR. Residues 13 to 33 form a helical membrane-spanning segment; the sequence is LALIIIALLALIALTSQWWLP. The Periplasmic segment spans residues 34–78; sequence YDPQAIDLPSRLLSPDAQHWLGTDHLGRDIFSRLMAATRVSLGSV. In terms of domain architecture, ABC transmembrane type-1 spans 67–260; the sequence is LMAATRVSLG…ISVMAFNLVG (194 aa). A helical transmembrane segment spans residues 79–99; sequence MACLLLVLTLGLVIGGSAGLI. Over 100 to 120 the chain is Cytoplasmic; it reads GGRVDQATMRVADMFMTFPTS. A helical membrane pass occupies residues 121-141; it reads ILSFFMVGVLGTGLTNVIIAI. Over 142–183 the chain is Periplasmic; it reads ALSHWAWYARMVRSLVISLRQREFVLASRLSGAGHVRVFVDH. Residues 184–204 traverse the membrane as a helical segment; the sequence is LAGAVIPSLLVLATLDIGHMM. Over 205-207 the chain is Cytoplasmic; the sequence is LHV. The chain crosses the membrane as a helical span at residues 208–228; the sequence is AGMSFLGLGVTAPTAEWGVMI. The Periplasmic portion of the chain corresponds to 229-239; sequence NDARQYIWTQP. A helical transmembrane segment spans residues 240–260; sequence LQMFWPGLALFISVMAFNLVG. Topologically, residues 261 to 277 are cytoplasmic; that stretch reads DALRDHLDPHLVTEHAH.

The protein belongs to the binding-protein-dependent transport system permease family. OppBC subfamily. In terms of assembly, probably forms a heterodimeric pore with NikB.

It localises to the cell inner membrane. Involved in a nickel transport system, probably translocates nickel through the bacterial inner membrane. This chain is Nickel transport system permease protein NikC (nikC), found in Escherichia coli O157:H7.